A 74-amino-acid chain; its full sequence is uncharacterized protein (74 aa).

This is an uncharacterized protein from Acidianus hospitalis (AFV-1).